Here is a 125-residue protein sequence, read N- to C-terminus: Glutaredoxin-C1 (125 aa).

The Glutaredoxin domain occupies 19-119; it reads VNKAKEIVSA…PLLTEAGAIA (101 aa). The cysteines at positions 39 and 42 are disulfide-linked.

The protein belongs to the glutaredoxin family. CPYC subfamily.

The protein localises to the cytoplasm. In terms of biological role, has a glutathione-disulfide oxidoreductase activity in the presence of NADPH and glutathione reductase. Reduces low molecular weight disulfides and proteins. In Arabidopsis thaliana (Mouse-ear cress), this protein is Glutaredoxin-C1 (GRXC1).